A 65-amino-acid chain; its full sequence is MWKLWKFVDFRMTAVGFHIFFALIAFAVHFACISSERFNWLEGAPAAEYYMDENPGIWKRTSYDG.

The Cytoplasmic segment spans residues 1–13; sequence MWKLWKFVDFRMT. Residues 14–34 form a helical membrane-spanning segment; it reads AVGFHIFFALIAFAVHFACIS. H29 provides a ligand contact to a bacteriochlorophyll. At 35–65 the chain is on the periplasmic side; it reads SERFNWLEGAPAAEYYMDENPGIWKRTSYDG.

This sequence belongs to the antenna complex alpha subunit family. The core complex is formed by different alpha and beta chains, binding bacteriochlorophyll molecules, and arranged most probably in tetrameric structures disposed around the reaction center. The non-pigmented gamma chains may constitute additional components.

It is found in the cell inner membrane. In terms of biological role, antenna complexes are light-harvesting systems, which transfer the excitation energy to the reaction centers. The polypeptide is Light-harvesting protein B800/830/1020 alpha-2 chain (Halorhodospira halochloris (Ectothiorhodospira halochloris)).